We begin with the raw amino-acid sequence, 87 residues long: Kappa-bungarotoxin (87 aa).

A signal peptide spans 1 to 21 (MKTLLLTLVVVTIVCLDLGYT). Cystine bridges form between Cys24-Cys42, Cys35-Cys63, Cys48-Cys52, Cys67-Cys79, and Cys80-Cys85.

Belongs to the three-finger toxin family. Long-chain subfamily. Kappa-neurotoxin sub-subfamily. As to quaternary structure, homodimer and heterodimer; non-covalently linked. In terms of tissue distribution, expressed by the venom gland.

The protein localises to the secreted. Its function is as follows. Postsynaptic neurotoxin that binds and inhibits neuronal nicotinic acetylcholine receptors (nAChR) with high affinity (IC(50)&lt;100 nM). Is a selective, and slowly reversible antagonist of alpha-3/CHRNA3-containing and some alpha-4/CHRNA4-containing AChRs. This chain is Kappa-bungarotoxin, found in Bungarus multicinctus (Many-banded krait).